We begin with the raw amino-acid sequence, 349 residues long: Flap endonuclease 1 (349 aa).

The N-domain stretch occupies residues 1–98; it reads MDLADLVKDV…EELERRRKAK (98 aa). 7 residues coordinate Mg(2+): Asp-27, Asp-80, Glu-152, Glu-154, Asp-173, Asp-175, and Asp-236. The segment at 116–258 is I-domain; that stretch reads ELRKYSQAIL…RALKIIKKYG (143 aa). Positions 341–349 are interaction with PCNA; the sequence is RQTGLDRWF.

The protein belongs to the XPG/RAD2 endonuclease family. FEN1 subfamily. As to quaternary structure, interacts with PCNA via subunit PCNA1. Mg(2+) is required as a cofactor.

Its activity is regulated as follows. Heterotrimeric PCNA stimulates the nuclease activity without altering cleavage specificity. Functionally, structure-specific nuclease with 5'-flap endonuclease and 5'-3' exonuclease activities involved in DNA replication and repair. During DNA replication, cleaves the 5'-overhanging flap structure that is generated by displacement synthesis when DNA polymerase encounters the 5'-end of a downstream Okazaki fragment. Binds the unpaired 3'-DNA end and kinks the DNA to facilitate 5' cleavage specificity. Cleaves one nucleotide into the double-stranded DNA from the junction in flap DNA, leaving a nick for ligation. Also involved in the base excision repair (BER) pathway. Acts as a genome stabilization factor that prevents flaps from equilibrating into structures that lead to duplications and deletions. Also possesses 5'-3' exonuclease activity on nicked or gapped double-stranded DNA. DNA polymerase I, DNA ligase and the flap endonuclease may be constitutively associated with the PCNA heterotrimer forming a scanning complex able to couple DNA synthesis and Okazaki fragment maturation. The polypeptide is Flap endonuclease 1 (Saccharolobus solfataricus (strain ATCC 35092 / DSM 1617 / JCM 11322 / P2) (Sulfolobus solfataricus)).